The following is a 147-amino-acid chain: MKVILKENVDNLGHIGDIVKVAPGYARNFLLPKGFAIEATEKNAKALEHAKRHLEYKKNKVLEAAKQLAAKIEGLSLSIAHQAGADDRLFGAVTNMELAEQLKANGIEMDRKRIVLAEPIKQLGDFTATVKIHPEVSATLKVAVTKA.

Belongs to the bacterial ribosomal protein bL9 family.

Binds to the 23S rRNA. The sequence is that of Large ribosomal subunit protein bL9 from Citrifermentans bemidjiense (strain ATCC BAA-1014 / DSM 16622 / JCM 12645 / Bem) (Geobacter bemidjiensis).